The primary structure comprises 34 residues: Putative protein YmiB (34 aa).

The helical transmembrane segment at 7 to 24 (TAAKRIVFFIYLFVIQFW) threads the bilayer.

The protein resides in the membrane. In Escherichia coli (strain K12), this protein is Putative protein YmiB (ymiB).